The following is a 232-amino-acid chain: Small ribosomal subunit protein uS3 (232 aa).

A KH type-2 domain is found at 39-107; the sequence is IRAFLKKKLY…EVNVNIKEER (69 aa). The segment at 211–232 is disordered; the sequence is GVQPEKTEEEAPKKTRRARRGK. A compositionally biased stretch (basic and acidic residues) spans 213–223; sequence QPEKTEEEAPK.

It belongs to the universal ribosomal protein uS3 family. Part of the 30S ribosomal subunit. Forms a tight complex with proteins S10 and S14.

Functionally, binds the lower part of the 30S subunit head. Binds mRNA in the 70S ribosome, positioning it for translation. The protein is Small ribosomal subunit protein uS3 of Campylobacter concisus (strain 13826).